Here is a 593-residue protein sequence, read N- to C-terminus: ESX-1 secretion system protein EccCb1 (593 aa).

FtsK domains are found at residues 66–260 and 350–546; these read RQEV…NETQ and QVPL…EKND. ATP contacts are provided by residues 85–92 and 377–384; these read GAPQTGKS and GAPKSGKT.

Part of the ESX-1 / type VII secretion system (T7SS), which is composed of cytosolic and membrane components. The ESX-1 membrane complex is composed of EccB1, EccCa1, EccCb1, EccD1 and EccE1.

It localises to the cytoplasm. Part of the ESX-1 / type VII specialized secretion system (T7SS), which exports several proteins including EsxA and EsxB. Plays a role in DNA conjugation, in both donor and recipient strains. The chain is ESX-1 secretion system protein EccCb1 (eccCb1) from Mycolicibacterium smegmatis (strain MKD8) (Mycobacterium smegmatis).